The chain runs to 54 residues: MLYYSIVFLLIALVAGLFGFVGIAGVATGIAKILFFVFLIAFVVSLVIGRRPRV.

2 helical membrane passes run 6-26 (IVFL…IAGV) and 29-49 (GIAK…LVIG).

It belongs to the UPF0391 family.

The protein resides in the cell membrane. The chain is UPF0391 membrane protein Sde_0270 from Saccharophagus degradans (strain 2-40 / ATCC 43961 / DSM 17024).